Consider the following 67-residue polypeptide: ATP synthase F(0) complex subunit 8 (67 aa).

Residues 8–24 traverse the membrane as a helical segment; sequence TWFTTILATITTLFILF. Lysine 54 bears the N6-acetyllysine; alternate mark. Residue lysine 54 is modified to N6-succinyllysine; alternate. N6-acetyllysine is present on lysine 57.

The protein belongs to the ATPase protein 8 family. In terms of assembly, component of the ATP synthase complex composed at least of ATP5F1A/subunit alpha, ATP5F1B/subunit beta, ATP5MC1/subunit c (homooctomer), MT-ATP6/subunit a, MT-ATP8/subunit 8, ATP5ME/subunit e, ATP5MF/subunit f, ATP5MG/subunit g, ATP5MK/subunit k, ATP5MJ/subunit j, ATP5F1C/subunit gamma, ATP5F1D/subunit delta, ATP5F1E/subunit epsilon, ATP5PF/subunit F6, ATP5PB/subunit b, ATP5PD/subunit d, ATP5PO/subunit OSCP. ATP synthase complex consists of a soluble F(1) head domain (subunits alpha(3) and beta(3)) - the catalytic core - and a membrane F(0) domain - the membrane proton channel (subunits c, a, 8, e, f, g, k and j). These two domains are linked by a central stalk (subunits gamma, delta, and epsilon) rotating inside the F1 region and a stationary peripheral stalk (subunits F6, b, d, and OSCP). Interacts with PRICKLE3.

It is found in the mitochondrion membrane. Its function is as follows. Subunit 8, of the mitochondrial membrane ATP synthase complex (F(1)F(0) ATP synthase or Complex V) that produces ATP from ADP in the presence of a proton gradient across the membrane which is generated by electron transport complexes of the respiratory chain. ATP synthase complex consist of a soluble F(1) head domain - the catalytic core - and a membrane F(1) domain - the membrane proton channel. These two domains are linked by a central stalk rotating inside the F(1) region and a stationary peripheral stalk. During catalysis, ATP synthesis in the catalytic domain of F(1) is coupled via a rotary mechanism of the central stalk subunits to proton translocation. In vivo, can only synthesize ATP although its ATP hydrolase activity can be activated artificially in vitro. Part of the complex F(0) domain. The protein is ATP synthase F(0) complex subunit 8 of Talpa europaea (European mole).